Reading from the N-terminus, the 206-residue chain is MAIKQPKGKTVRRLGVNIYGNPKYDKLLDRKPNGPGKERGARKRGKTSVYGEQLKEKQKFRFAYGISERQFRNLYKKASRMPGVTGDNMISLMEQRLDNTIYRMGFAISRAQARQMVTHAYFFINGKPVNIPSMCVSVNDVITTKNKKGIQNLIRHNMSTSQSARGSWLTIDDEKLSATVNILPVTTDIQPVGNIQNVVEYYSRNA.

A compositionally biased stretch (basic and acidic residues) spans 25 to 39 (DKLLDRKPNGPGKER). Residues 25-49 (DKLLDRKPNGPGKERGARKRGKTSV) form a disordered region. The 63-residue stretch at 95–157 (QRLDNTIYRM…KGIQNLIRHN (63 aa)) folds into the S4 RNA-binding domain.

This sequence belongs to the universal ribosomal protein uS4 family. In terms of assembly, part of the 30S ribosomal subunit. Contacts protein S5. The interaction surface between S4 and S5 is involved in control of translational fidelity.

In terms of biological role, one of the primary rRNA binding proteins, it binds directly to 16S rRNA where it nucleates assembly of the body of the 30S subunit. With S5 and S12 plays an important role in translational accuracy. The polypeptide is Small ribosomal subunit protein uS4 (Treponema denticola (strain ATCC 35405 / DSM 14222 / CIP 103919 / JCM 8153 / KCTC 15104)).